A 163-amino-acid chain; its full sequence is MNILLSIAITTGILSGIWGWVAVSLGLLSWAGFLGCTAYFACPQGGLKGLAISAATLLSGVVWAMVIIYGSALAPHLEILGYVITGIVAFLMCIQAKQLLLSFVPGTFIGACATFAGQGDWKLVLPSLALGLIFGYAMKNSGLWLAARSAKTAHREQEIKNKA.

The Cytoplasmic segment spans residues 1–2 (MN). The helical transmembrane segment at 3–23 (ILLSIAITTGILSGIWGWVAV) threads the bilayer. Residue Ser-24 is a topological domain, periplasmic. Residues 25–45 (LGLLSWAGFLGCTAYFACPQG) form a helical membrane-spanning segment. The Cytoplasmic portion of the chain corresponds to 46 to 48 (GLK). The helical transmembrane segment at 49–69 (GLAISAATLLSGVVWAMVIIY) threads the bilayer. Residues 70–71 (GS) are Periplasmic-facing. Residues 72 to 92 (ALAPHLEILGYVITGIVAFLM) form a helical membrane-spanning segment. The Cytoplasmic portion of the chain corresponds to 93 to 98 (CIQAKQ). The helical transmembrane segment at 99-119 (LLLSFVPGTFIGACATFAGQG) threads the bilayer. Topologically, residues 120 to 122 (DWK) are periplasmic. Residues 123–143 (LVLPSLALGLIFGYAMKNSGL) form a helical membrane-spanning segment. Residues 144–163 (WLAARSAKTAHREQEIKNKA) are Cytoplasmic-facing.

The protein to E.coli YahC.

It localises to the cell inner membrane. This is Inner membrane protein YcdZ (ycdZ) from Escherichia coli (strain K12).